A 735-amino-acid polypeptide reads, in one-letter code: Disintegrin and metalloproteinase domain-containing protein 2 (735 aa).

Residues 1 to 16 (MWRVLFLLSGLGGLRM) form the signal peptide. Positions 17–174 (DSNFDSLPVQ…FKLQSVEPQQ (158 aa)) are excised as a propeptide. N-linked (GlcNAc...) asparagine glycosylation is found at N122 and N220. Residues 175-686 (DFAKYIEMHV…ENIYHSKPMR (512 aa)) are Extracellular-facing. Residues 178–375 (KYIEMHVIVE…QKSQCLHNQP (198 aa)) form the Peptidase M12B domain. Intrachain disulfides connect C287–C370, C329–C354, C331–C336, and C445–C465. 3 N-linked (GlcNAc...) asparagine glycosylation sites follow: N353, N459, and N566. The 90-residue stretch at 384 to 473 (QAVCGNAKLE…SCPENHYVQT (90 aa)) folds into the Disintegrin domain. The region spanning 612-645 (LGYDCTTDKCNDRGVCNNKKHCHCSASYLPPDCS) is the EGF-like domain. 3 cysteine pairs are disulfide-bonded: C616/C627, C621/C633, and C635/C644. The chain crosses the membrane as a helical span at residues 687–707 (WPFFLFIPFFIIFCVLIAIMV). At 708–735 (KVNFQRKKWRTEDYSSDEQPESESEPKG) the chain is on the cytoplasmic side. Phosphoserine is present on S729.

In terms of processing, the prodomain and the metalloprotease domain are cleaved during the epididymal maturation of the spermatozoa. Expressed specifically in spermatogenic cells in the seminiferous cells. Not detected in fetal tissues.

The protein localises to the membrane. Functionally, sperm surface membrane protein that may be involved in sperm-egg plasma membrane adhesion and fusion during fertilization. Could have a direct role in sperm-zona binding or migration of sperm from the uterus into the oviduct. Interactions with egg membrane could be mediated via binding between its disintegrin-like domain to one or more integrins receptors on the egg. This is a non catalytic metalloprotease-like protein. This chain is Disintegrin and metalloproteinase domain-containing protein 2 (ADAM2), found in Homo sapiens (Human).